The sequence spans 154 residues: Ribosomal RNA-processing protein 14-N (154 aa).

The tract at residues 36–154 (WKQKKSTLEE…KHKASPRAGF (119 aa)) is disordered. Position 80 is a phosphoserine (S80). Residue T83 is modified to Phosphothreonine. The segment covering 105-133 (QDLREKRKAGDLNQKRQNKRPVENEKDSQ) has biased composition (basic and acidic residues). Over residues 140–154 (KVQKKKHKASPRAGF) the composition is skewed to basic residues.

This sequence belongs to the SURF6 family.

Its subcellular location is the nucleus. The protein resides in the nucleolus. Involved in ribosome biogenesis and cell polarity. Required for the synthesis of both 40S and 60S ribosomal subunits and may also play some direct role in correct positioning of the mitotic spindle during mitosis. The sequence is that of Ribosomal RNA-processing protein 14-N (rrp14n) from Schizosaccharomyces pombe (strain 972 / ATCC 24843) (Fission yeast).